A 442-amino-acid polypeptide reads, in one-letter code: MYDGLKGFRDFYPGEQSARREVTDAIEDAASRYGFREIATPALERTEMYVDKSGEEIVEELYAFEDKGGRGVSMTPELTPTVARMVVAKGQELSKPIKWMSTRPFWRYEQVQQGRFREFYQTNIDVFGSSAPEADAEVLAVAADALTDLGLTNDDFEFRVSHRDILGGLVRALAADPDAVDTKAAIRAVDKRAKVDDGEYLGLLSDAGLDRATAQEFDDLISDVETVDDLDAVAEAGGEDVEAAVENLRNVLAAADDFGAGAFCEVSLTTARGLDYYTGVVFECFDSTGEVSRSVFGGGRYDDLIESFGGQPTPAVGVAPGHAPLSLLCQRAGVWPDEELTTDYYVLSVGDTRSEATALARDLRALGDDVVVEQDVSGRSFGAQLGYADSINAETVVVVGERDLENGEYTVKDMASGDETTVPVEEFPPEGGEELPTYEDYE.

Residues 416–442 (SGDETTVPVEEFPPEGGEELPTYEDYE) form a disordered region. Positions 427–442 (FPPEGGEELPTYEDYE) are enriched in acidic residues.

It belongs to the class-II aminoacyl-tRNA synthetase family.

Its subcellular location is the cytoplasm. The catalysed reaction is tRNA(His) + L-histidine + ATP = L-histidyl-tRNA(His) + AMP + diphosphate + H(+). The protein is Histidine--tRNA ligase of Halorubrum lacusprofundi (strain ATCC 49239 / DSM 5036 / JCM 8891 / ACAM 34).